A 471-amino-acid chain; its full sequence is MASKSQHNASKAKNHNVKAESQGQWGRAWEVDWFSLVSVIFLLLFAPFIVYYFIMACDQYSCSLTAPILDVATGRASLADIWAKTPPVTAKAAQLYALWVSFQVLLYSWLPDFCHRFLPGYVGGVQEGAITPAGIVNKYEVNGLQAWLITHFLWFVNAYLLSWFSPTIIFDNWIPLLWCANILGYAVSTFAMIKGYLFPTSAEDCKFTGNFFYNYMMGIEFNPRIGKWFDFKLFFNGRPGIVAWTLINLSFAAKQQELYGHVTNSMILVNVLQAIYVLDFFWNETWYLKTIDICHDHFGWYLGWGDCVWLPYLYTLQGLYLVYHPVQLSTPNALGVLLLGLVGYYIFRMTNHQKDLFRRTDGHCLIWGKKPKAIECSYTSADGLKHRSKLLVSGFWGVARHFNYTGDLMGSLAYCLACGGGHLLPYFYIIYMTILLTHRCLRDEHRCANKYGRDWERYVAAVPYRLLPGIF.

The next 8 membrane-spanning stretches (helical) occupy residues 36–56 (LVSV…FIMA), 95–115 (LYAL…DFCH), 144–164 (LQAW…LSWF), 173–193 (WIPL…FAMI), 233–253 (LFFN…SFAA), 262–282 (VTNS…DFFW), 302–322 (LGWG…LYLV), and 327–347 (QLST…YYIF). NADP(+) is bound by residues Lys354, Arg358, Leu391, Trp396, and 403-404 (NY). Residues 416–436 (LACGGGHLLPYFYIIYMTILL) form a helical membrane-spanning segment. NADP(+) contacts are provided by residues Asp443, 447–451 (CANKY), and Tyr458.

Belongs to the ERG4/ERG24 family. Interacts with DHCR24; this interaction regulates DHCR7 activity. Interacts with TMEM147. As to expression, highest expression is detected in liver, followed by kidney and brain.

It localises to the endoplasmic reticulum membrane. It carries out the reaction cholesterol + NADP(+) = 7-dehydrocholesterol + NADPH + H(+). It catalyses the reaction 7-dehydrodesmosterol + NADPH + H(+) = desmosterol + NADP(+). The enzyme catalyses 5,6alpha-epoxy-5alpha-cholestan-3beta-ol + H2O = 5alpha-cholestane-3beta,5,6beta-triol. The catalysed reaction is 5,6beta-epoxy-5beta-cholestan-3beta-ol + H2O = 5alpha-cholestane-3beta,5,6beta-triol. It participates in steroid biosynthesis; cholesterol biosynthesis. Oxidoreductase that catalyzes the last step of the cholesterol synthesis pathway, which transforms cholesta-5,7-dien-3beta-ol (7-dehydrocholesterol,7-DHC) into cholesterol by reducing the C7-C8 double bond of its sterol core. Can also metabolize cholesta-5,7,24-trien-3beta-ol (7-dehydrodemosterol, 7-DHD) to desmosterol, which is then metabolized by the Delta(24)-sterol reductase (DHCR24) to cholesterol. Modulates ferroptosis (a form of regulated cell death driven by iron-dependent lipid peroxidation) through the metabolic breakdown of the anti-ferroptotic metabolites 7-DHC and 7-DHD which, when accumulated, divert the propagation of peroxyl radical-mediated damage from phospholipid components to its sterol core, protecting plasma and mitochondrial membranes from phospholipid autoxidation. Its function is as follows. Component of the microsomal antiestrogen binding site (AEBS), a multiproteic complex at the ER membrane that consists of an association between cholestenol Delta-isomerase/EBP and DHCR7. This complex is responsible for cholesterol-5,6-epoxide hydrolase (ChEH) activity, which consists in the hydration of cholesterol-5,6-epoxides (5,6-EC) into cholestane-3beta,5alpha,6beta-triol (CT). The precise role of each component of this complex has not been described yet. This is 7-dehydrocholesterol reductase (Dhcr7) from Rattus norvegicus (Rat).